A 565-amino-acid chain; its full sequence is Periplasmic trehalase (565 aa).

The signal sequence occupies residues Met-1–Ala-30. Substrate-binding positions include Arg-152, Trp-159–Asp-160, Asn-196, Arg-205–Gln-207, Arg-277–Glu-279, and Gly-310. Active-site proton donor/acceptor residues include Asp-312 and Glu-496. Substrate is bound at residue Glu-511. Residues Cys-539–Pro-565 form a disordered region.

Belongs to the glycosyl hydrolase 37 family. As to quaternary structure, monomer.

It localises to the periplasm. It catalyses the reaction alpha,alpha-trehalose + H2O = alpha-D-glucose + beta-D-glucose. Provides the cells with the ability to utilize trehalose at high osmolarity by splitting it into glucose molecules that can subsequently be taken up by the phosphotransferase-mediated uptake system. The polypeptide is Periplasmic trehalase (Escherichia coli O7:K1 (strain IAI39 / ExPEC)).